The primary structure comprises 591 residues: Metalloendopeptidase OPG085 (591 aa).

Zn(2+) is bound at residue H41. E44 is a catalytic residue. Residues H45 and E112 each coordinate Zn(2+).

It belongs to the peptidase M44 family. The cofactor is Zn(2+). Post-translationally, undergoes proteolytic processing during the course of infection. May be cleaved into 46 kDa and 22 kDa products (Potential).

It localises to the virion. Functionally, probably involved in maturation of some viral proteins by processing them preferentially at Ala-Gly-|-Ser/Thr/Lys motifs. Does not seem to be responsible for the cleavage of major core proteins. The protein is Metalloendopeptidase OPG085 (OPG085) of Variola virus (isolate Human/India/Ind3/1967) (VARV).